Consider the following 261-residue polypeptide: Eukaryotic translation initiation factor 3 subunit G (261 aa).

The disordered stretch occupies residues 156 to 180 (QDADSKNALGLRGDGRQMERNRSDE). Positions 168–180 (GDGRQMERNRSDE) are enriched in basic and acidic residues. The 79-residue stretch at 181 to 259 (NTCRVTNLPQ…MVLKVEWTRP (79 aa)) folds into the RRM domain.

This sequence belongs to the eIF-3 subunit G family. As to quaternary structure, component of the eukaryotic translation initiation factor 3 (eIF-3) complex.

Its subcellular location is the cytoplasm. In terms of biological role, RNA-binding component of the eukaryotic translation initiation factor 3 (eIF-3) complex, which is involved in protein synthesis of a specialized repertoire of mRNAs and, together with other initiation factors, stimulates binding of mRNA and methionyl-tRNAi to the 40S ribosome. The eIF-3 complex specifically targets and initiates translation of a subset of mRNAs involved in cell proliferation. This subunit can bind 18S rRNA. The polypeptide is Eukaryotic translation initiation factor 3 subunit G (Caenorhabditis briggsae).